Here is a 264-residue protein sequence, read N- to C-terminus: Probable metallo-hydrolase YflN (264 aa).

Residues H80, H82, D84, H85, H169, D188, and H241 each contribute to the Zn(2+) site.

This sequence belongs to the metallo-beta-lactamase superfamily. Zn(2+) is required as a cofactor.

This chain is Probable metallo-hydrolase YflN (yflN), found in Bacillus subtilis (strain 168).